We begin with the raw amino-acid sequence, 342 residues long: Phenylalanine--tRNA ligase alpha subunit (342 aa).

Residue Glu257 coordinates Mg(2+).

It belongs to the class-II aminoacyl-tRNA synthetase family. Phe-tRNA synthetase alpha subunit type 1 subfamily. In terms of assembly, tetramer of two alpha and two beta subunits. It depends on Mg(2+) as a cofactor.

The protein resides in the cytoplasm. The enzyme catalyses tRNA(Phe) + L-phenylalanine + ATP = L-phenylalanyl-tRNA(Phe) + AMP + diphosphate + H(+). The polypeptide is Phenylalanine--tRNA ligase alpha subunit (Chlamydia trachomatis serovar A (strain ATCC VR-571B / DSM 19440 / HAR-13)).